An 834-amino-acid polypeptide reads, in one-letter code: Periplasmic nitrate reductase (834 aa).

A signal peptide (tat-type signal) is located at residues 1 to 29 (MNLTRREFAKANAAAIAAAAAGLPILVRA). Residues 41–97 (LVWNKAPCRFCGTGCSVMVATRDGQVVATHGDIKAEVNRGINCVKGYFLSKIMYGSD) enclose the 4Fe-4S Mo/W bis-MGD-type domain. [4Fe-4S] cluster contacts are provided by Cys-48, Cys-51, Cys-55, and Cys-83. Residues Lys-85, Gln-152, Asn-177, Cys-181, 214 to 221 (WGSNMAEM), 245 to 249 (STFEH), 264 to 266 (QTD), Met-375, Gln-379, Asn-485, 511 to 512 (SD), Lys-534, Asp-561, and 721 to 730 (TGRVLEHWHT) contribute to the Mo-bis(molybdopterin guanine dinucleotide) site. A substrate-binding site is contributed by Phe-797. Mo-bis(molybdopterin guanine dinucleotide) is bound by residues Asn-805 and Lys-822.

The protein belongs to the prokaryotic molybdopterin-containing oxidoreductase family. NasA/NapA/NarB subfamily. As to quaternary structure, component of the periplasmic nitrate reductase NapAB complex composed of NapA and NapB. [4Fe-4S] cluster is required as a cofactor. It depends on Mo-bis(molybdopterin guanine dinucleotide) as a cofactor. In terms of processing, predicted to be exported by the Tat system. The position of the signal peptide cleavage has not been experimentally proven.

Its subcellular location is the periplasm. It catalyses the reaction 2 Fe(II)-[cytochrome] + nitrate + 2 H(+) = 2 Fe(III)-[cytochrome] + nitrite + H2O. Catalytic subunit of the periplasmic nitrate reductase complex NapAB. Receives electrons from NapB and catalyzes the reduction of nitrate to nitrite. This Pseudomonas aeruginosa (strain LESB58) protein is Periplasmic nitrate reductase.